Consider the following 37-residue polypeptide: ATFTVINKCQYTVWAAAVPAGGGQKLDAGQTWSIXXP.

The protein belongs to the thaumatin family.

In terms of biological role, has antifungal activity. Inhibits the growth of Trichoderma viridae and Candida albicans. The chain is Antifungal protein S from Hordeum vulgare (Barley).